A 210-amino-acid chain; its full sequence is MANVELSEGTIQVRGQSLFFREARPGNGQAVRFSVLLLHGIRFSSETWQNLGTLHRLAEAGYRAVAIDLPGLGRSKEAAAPAPIGELAPGSFLAAVVDALELGSLVVISPSLSGMYALPFLVAPESQLRGYVPVAPICTDKINAADYARVKTPTLIVYGDQDPMGSSSFQHLKQLPNHRVLVMEGAGHPCYLDKPDEWHTGLLDFLQELA.

A Phosphoserine modification is found at Ser-91. Residues Ser-111, Asp-162, and His-188 each act as charge relay system in the active site.

Belongs to the AB hydrolase superfamily. ABHD14 family. In terms of assembly, may interact with TAF1.

The protein resides in the cytoplasm. It localises to the nucleus. The catalysed reaction is L-lysyl-[protein] + acetyl-CoA = N(6)-acetyl-L-lysyl-[protein] + CoA + H(+). In terms of biological role, acts as an atypical protein-lysine deacetylase in vitro. Catalyzes the deacetylation of lysine residues using CoA as substrate, generating acetyl-CoA and the free amine of protein-lysine residues. Additional experiments are however required to confirm the protein-lysine deacetylase activity in vivo. Has hydrolase activity towards various surrogate p-nitrophenyl (pNp) substrates, such as pNp-butyrate, pNp-acetate and pNp-octanoate in vitro, with a strong preference for pNp-acetate. May activate transcription. This chain is Putative protein-lysine deacylase ABHD14B, found in Rattus norvegicus (Rat).